The chain runs to 1112 residues: Cytosolic carboxypeptidase 4 (1112 aa).

The segment at 291-345 is disordered; the sequence is TTEPPHDLPEEDFEDDGDDEVDKDSDTEDGKVEDDDLETDVNKLSSKPGLDRPEE. Over residues 299 to 329 the composition is skewed to acidic residues; sequence PEEDFEDDGDDEVDKDSDTEDGKVEDDDLET. The 291-residue stretch at 732-1022 folds into the Peptidase M14 domain; sequence YPYTYTALMT…HPVDGLQGLQ (291 aa). Zn(2+) contacts are provided by His804, Glu807, and His901. Glu986 functions as the Proton donor/acceptor in the catalytic mechanism.

The protein belongs to the peptidase M14 family. As to quaternary structure, interacts with MYLK. Interacts with TCF4. Zn(2+) is required as a cofactor. As to expression, expressed in corneal endothelium.

It localises to the cytoplasm. The protein resides in the cytosol. The enzyme catalyses (L-glutamyl)(n+1)-gamma-L-glutamyl-L-glutamyl-[protein] + H2O = (L-glutamyl)(n)-gamma-L-glutamyl-L-glutamyl-[protein] + L-glutamate. It carries out the reaction C-terminal L-alpha-aminoacyl-L-glutamyl-L-glutamyl-[tubulin] + H2O = C-terminal L-alpha-aminoacyl-L-glutamyl-[tubulin] + L-glutamate. Metallocarboxypeptidase that mediates deglutamylation of tubulin and non-tubulin target proteins. Catalyzes the removal of polyglutamate side chains present on the gamma-carboxyl group of glutamate residues within the C-terminal tail of tubulin protein. Specifically cleaves tubulin long-side-chains, while it is not able to remove the branching point glutamate. Also catalyzes the removal of polyglutamate residues from the carboxy-terminus of non-tubulin proteins such as MYLK. The protein is Cytosolic carboxypeptidase 4 of Homo sapiens (Human).